The sequence spans 122 residues: Large ribosomal subunit protein uL14 (122 aa).

The protein belongs to the universal ribosomal protein uL14 family. In terms of assembly, part of the 50S ribosomal subunit. Forms a cluster with proteins L3 and L19. In the 70S ribosome, L14 and L19 interact and together make contacts with the 16S rRNA in bridges B5 and B8.

Functionally, binds to 23S rRNA. Forms part of two intersubunit bridges in the 70S ribosome. The protein is Large ribosomal subunit protein uL14 of Nitrosococcus oceani (strain ATCC 19707 / BCRC 17464 / JCM 30415 / NCIMB 11848 / C-107).